The primary structure comprises 201 residues: Holliday junction resolvase RecU (201 aa).

Positions 85, 87, 100, and 119 each coordinate Mg(2+).

The protein belongs to the RecU family. The cofactor is Mg(2+).

It is found in the cytoplasm. It catalyses the reaction Endonucleolytic cleavage at a junction such as a reciprocal single-stranded crossover between two homologous DNA duplexes (Holliday junction).. Functionally, endonuclease that resolves Holliday junction intermediates in genetic recombination. Cleaves mobile four-strand junctions by introducing symmetrical nicks in paired strands. Promotes annealing of linear ssDNA with homologous dsDNA. Required for DNA repair, homologous recombination and chromosome segregation. The polypeptide is Holliday junction resolvase RecU (Geobacillus sp. (strain WCH70)).